A 379-amino-acid polypeptide reads, in one-letter code: Succinyl-diaminopimelate desuccinylase (379 aa).

Residue H68 coordinates Zn(2+). The active site involves D70. D101 contacts Zn(2+). Catalysis depends on E135, which acts as the Proton acceptor. The Zn(2+) site is built by E136, E164, and H350.

This sequence belongs to the peptidase M20A family. DapE subfamily. As to quaternary structure, homodimer. The cofactor is Zn(2+). Co(2+) serves as cofactor.

The enzyme catalyses N-succinyl-(2S,6S)-2,6-diaminopimelate + H2O = (2S,6S)-2,6-diaminopimelate + succinate. It functions in the pathway amino-acid biosynthesis; L-lysine biosynthesis via DAP pathway; LL-2,6-diaminopimelate from (S)-tetrahydrodipicolinate (succinylase route): step 3/3. Functionally, catalyzes the hydrolysis of N-succinyl-L,L-diaminopimelic acid (SDAP), forming succinate and LL-2,6-diaminopimelate (DAP), an intermediate involved in the bacterial biosynthesis of lysine and meso-diaminopimelic acid, an essential component of bacterial cell walls. This Bordetella parapertussis (strain 12822 / ATCC BAA-587 / NCTC 13253) protein is Succinyl-diaminopimelate desuccinylase.